The chain runs to 366 residues: Glutamate 5-kinase (366 aa).

K17 serves as a coordination point for ATP. Residues S57, D144, and N156 each contribute to the substrate site. ATP is bound by residues 176 to 177 and 216 to 222; these read SD and TGGMASK. The 75-residue stretch at 278 to 352 folds into the PUA domain; that stretch reads QGILHIDEGA…GKSTQELPAE (75 aa).

This sequence belongs to the glutamate 5-kinase family.

It localises to the cytoplasm. The enzyme catalyses L-glutamate + ATP = L-glutamyl 5-phosphate + ADP. The protein operates within amino-acid biosynthesis; L-proline biosynthesis; L-glutamate 5-semialdehyde from L-glutamate: step 1/2. In terms of biological role, catalyzes the transfer of a phosphate group to glutamate to form L-glutamate 5-phosphate. The protein is Glutamate 5-kinase of Rhodococcus jostii (strain RHA1).